Here is a 180-residue protein sequence, read N- to C-terminus: Large ribosomal subunit protein uL22 (180 aa).

2 disordered regions span residues M1–R20 and P160–A180. The segment covering K8–R20 has biased composition (polar residues).

This sequence belongs to the universal ribosomal protein uL22 family.

In Dictyostelium discoideum (Social amoeba), this protein is Large ribosomal subunit protein uL22 (rpl17).